The following is a 218-amino-acid chain: Large ribosomal subunit protein uL3 (218 aa).

The disordered stretch occupies residues 127–167; the sequence is GFSRGPMSHGSKNHREPGSTGAGTTPGRIYPGKRMAGRYGG.

The protein belongs to the universal ribosomal protein uL3 family. In terms of assembly, part of the 50S ribosomal subunit. Forms a cluster with proteins L14 and L19.

In terms of biological role, one of the primary rRNA binding proteins, it binds directly near the 3'-end of the 23S rRNA, where it nucleates assembly of the 50S subunit. The polypeptide is Large ribosomal subunit protein uL3 (Prochlorococcus marinus (strain MIT 9303)).